The primary structure comprises 226 residues: MASLCLSSSRIVSLHHQKPFLALKLRPRPSNISGLGHSTSVVCFNPLRLSADRQRTATVSARAEKRRKRGSSVVCYATPMLSVHNLQWISTISCVALMFARGTGIHKSFVVPLFALQAPMGIVSWMKGEYGIWAAFLALLTRLFFSFPVELELPFIALLLVIVAPYQVMSIRGKQEGAILSLAISCFLAFQHFSRAGTLQKAFDQNSVLATVAIIGVTVVSFLFLI.

The N-terminal 76 residues, 1–76 (MASLCLSSSR…RKRGSSVVCY (76 aa)), are a transit peptide targeting the chloroplast. Topologically, residues 77–79 (ATP) are stromal. The chain crosses the membrane as a helical span at residues 80–100 (MLSVHNLQWISTISCVALMFA). Topologically, residues 101–103 (RGT) are chloroplast intermembrane. A helical membrane pass occupies residues 104 to 124 (GIHKSFVVPLFALQAPMGIVS). At 125-129 (WMKGE) the chain is on the stromal side. The helical transmembrane segment at 130-150 (YGIWAAFLALLTRLFFSFPVE) threads the bilayer. The Chloroplast intermembrane portion of the chain corresponds to 151-152 (LE). The helical transmembrane segment at 153-173 (LPFIALLLVIVAPYQVMSIRG) threads the bilayer. Over 174-176 (KQE) the chain is Stromal. A helical transmembrane segment spans residues 177–197 (GAILSLAISCFLAFQHFSRAG). Residues 198–205 (TLQKAFDQ) are Chloroplast intermembrane-facing. Residues 206 to 226 (NSVLATVAIIGVTVVSFLFLI) form a helical membrane-spanning segment.

Belongs to the Cold-regulated 413 protein family.

It is found in the plastid. The protein localises to the chloroplast inner membrane. The protein is Cold-regulated 413 inner membrane protein 2, chloroplastic (COR413IM2) of Arabidopsis thaliana (Mouse-ear cress).